The primary structure comprises 420 residues: 4-hydroxy-3-methylbut-2-en-1-yl diphosphate synthase (flavodoxin) (420 aa).

The [4Fe-4S] cluster site is built by Cys307, Cys310, Cys353, and Glu360.

This sequence belongs to the IspG family. The cofactor is [4Fe-4S] cluster.

The catalysed reaction is (2E)-4-hydroxy-3-methylbut-2-enyl diphosphate + oxidized [flavodoxin] + H2O + 2 H(+) = 2-C-methyl-D-erythritol 2,4-cyclic diphosphate + reduced [flavodoxin]. It functions in the pathway isoprenoid biosynthesis; isopentenyl diphosphate biosynthesis via DXP pathway; isopentenyl diphosphate from 1-deoxy-D-xylulose 5-phosphate: step 5/6. Converts 2C-methyl-D-erythritol 2,4-cyclodiphosphate (ME-2,4cPP) into 1-hydroxy-2-methyl-2-(E)-butenyl 4-diphosphate. In Brucella abortus (strain S19), this protein is 4-hydroxy-3-methylbut-2-en-1-yl diphosphate synthase (flavodoxin).